Consider the following 332-residue polypeptide: Glycerol-3-phosphate dehydrogenase [NAD(P)+] (332 aa).

Residues tryptophan 11, arginine 30, and lysine 108 each coordinate NADPH. Positions 108, 137, and 139 each coordinate sn-glycerol 3-phosphate. Position 141 (alanine 141) interacts with NADPH. Residues lysine 192, aspartate 245, serine 255, arginine 256, and asparagine 257 each contribute to the sn-glycerol 3-phosphate site. Lysine 192 (proton acceptor) is an active-site residue. Arginine 256 lines the NADPH pocket. Residues valine 280 and glutamate 282 each contribute to the NADPH site.

The protein belongs to the NAD-dependent glycerol-3-phosphate dehydrogenase family.

It localises to the cytoplasm. It carries out the reaction sn-glycerol 3-phosphate + NAD(+) = dihydroxyacetone phosphate + NADH + H(+). It catalyses the reaction sn-glycerol 3-phosphate + NADP(+) = dihydroxyacetone phosphate + NADPH + H(+). It participates in membrane lipid metabolism; glycerophospholipid metabolism. Catalyzes the reduction of the glycolytic intermediate dihydroxyacetone phosphate (DHAP) to sn-glycerol 3-phosphate (G3P), the key precursor for phospholipid synthesis. In Burkholderia ambifaria (strain MC40-6), this protein is Glycerol-3-phosphate dehydrogenase [NAD(P)+].